We begin with the raw amino-acid sequence, 440 residues long: GTPase Der (440 aa).

EngA-type G domains lie at 4 to 168 (PIVA…NPED) and 177 to 352 (IKVA…NQNA). Residues 10–17 (GRPNVGKS), 57–61 (DTGGI), 120–123 (NKVD), 183–190 (GKPNVGKS), 230–234 (DTAGI), and 295–298 (NKWD) each bind GTP. Positions 353 to 437 (MRIPTGALNE…PIRFILREKT (85 aa)) constitute a KH-like domain.

Belongs to the TRAFAC class TrmE-Era-EngA-EngB-Septin-like GTPase superfamily. EngA (Der) GTPase family. Associates with the 50S ribosomal subunit.

GTPase that plays an essential role in the late steps of ribosome biogenesis. In Alkaliphilus oremlandii (strain OhILAs) (Clostridium oremlandii (strain OhILAs)), this protein is GTPase Der.